Reading from the N-terminus, the 128-residue chain is MTKEELINEIKNMTVGELAELVKALEDEFGVSAAAPVMAAVPGVAGVSPAQQEEEKTDFKVVLKGFGDKKIGVIKVVREITNLGLKEAKDLVEKAGTPDAVIKEGVPKEEAEEIKKKLEEAGAEVELK.

The protein belongs to the bacterial ribosomal protein bL12 family. In terms of assembly, homodimer. Part of the ribosomal stalk of the 50S ribosomal subunit. Forms a multimeric L10(L12)X complex, where L10 forms an elongated spine to which 2 to 4 L12 dimers bind in a sequential fashion. Binds GTP-bound translation factors.

Functionally, forms part of the ribosomal stalk which helps the ribosome interact with GTP-bound translation factors. Is thus essential for accurate translation. The sequence is that of Large ribosomal subunit protein bL12 from Petrotoga mobilis (strain DSM 10674 / SJ95).